Reading from the N-terminus, the 208-residue chain is Protein-L-isoaspartate O-methyltransferase (208 aa).

Residue Ser59 is part of the active site.

The protein belongs to the methyltransferase superfamily. L-isoaspartyl/D-aspartyl protein methyltransferase family. Monomer.

It is found in the cytoplasm. It catalyses the reaction [protein]-L-isoaspartate + S-adenosyl-L-methionine = [protein]-L-isoaspartate alpha-methyl ester + S-adenosyl-L-homocysteine. Catalyzes the methyl esterification of L-isoaspartyl residues in peptides and proteins that result from spontaneous decomposition of normal L-aspartyl and L-asparaginyl residues. It plays a role in the repair and/or degradation of damaged proteins. The protein is Protein-L-isoaspartate O-methyltransferase (pcm) of Shigella flexneri.